The following is a 543-amino-acid chain: Carotenoid 9,10(9',10')-cleavage dioxygenase 1 (543 aa).

Fe cation contacts are provided by His224, His272, His338, and His528.

Belongs to the carotenoid oxygenase family. As to quaternary structure, homodimer. The cofactor is Fe(2+).

The enzyme catalyses all-trans-zeaxanthin + 2 O2 = 4,9-dimethyldodeca-2,4,6,8,10-pentaenedial + 2 (3R)-hydroxy-beta-ionone. Cleaves a variety of carotenoids at the 9-10 and 9'-10' double bonds. Probably not involved in abscisic acid biosynthesis. The chain is Carotenoid 9,10(9',10')-cleavage dioxygenase 1 (CCD1) from Phaseolus vulgaris (Kidney bean).